Reading from the N-terminus, the 216-residue chain is DegV domain-containing protein UU190 (216 aa).

The DegV domain maps to methionine 1–alanine 215. Position 26 (serine 26) interacts with hexadecanoate.

Its function is as follows. May bind long-chain fatty acids, such as palmitate, and may play a role in lipid transport or fatty acid metabolism. The polypeptide is DegV domain-containing protein UU190 (Ureaplasma parvum serovar 3 (strain ATCC 700970)).